The following is a 173-amino-acid chain: Putative C-type lectin protein FPV198 (173 aa).

The C-type lectin domain maps to 50-169 (GMSGWVQINN…CNKKHTGICF (120 aa)).

This is Putative C-type lectin protein FPV198 from Vertebrata (FPV).